Consider the following 304-residue polypeptide: Putative S-adenosyl-L-methionine-dependent methyltransferase YktD (304 aa).

S-adenosyl-L-methionine-binding positions include D134 and D163–F164.

The protein belongs to the UPF0677 family.

Its function is as follows. May be involved in polyketide synthesis. The sequence is that of Putative S-adenosyl-L-methionine-dependent methyltransferase YktD (yktD) from Bacillus subtilis (strain 168).